A 1228-amino-acid polypeptide reads, in one-letter code: DNA repair protein rad5 (1228 aa).

Disordered regions lie at residues 1–96 (MDRH…GTLT), 194–242 (PPVR…VLPS), 280–302 (QPPT…PRVS), and 445–474 (KAMD…QELE). Residues 34–43 (PSSSPQFSAP) show a composition bias toward low complexity. Over residues 70 to 83 (HNDDDDDDDDDDDE) the composition is skewed to acidic residues. Residues 211–237 (PKKSSTSQARSRSHAQAQPQPQSNTPT) are compositionally biased toward polar residues. Basic and acidic residues predominate over residues 445–454 (KAMDKAKAGD). Positions 465–474 (EEAEEGQELE) are enriched in acidic residues. The region spanning 574-784 (PKQEQHCLGG…FSLVRFLRVE (211 aa)) is the Helicase ATP-binding domain. Residue 587–594 (DEMGLGKT) coordinates ATP. The short motif at 735 to 738 (DEAH) is the DEAH box element. An RING-type zinc finger spans residues 967–1012 (CPICAEEPMIDQAVTGCWHSACKKCLLDYIKHQTDRNEVPRCFQCR). The Helicase C-terminal domain maps to 1060-1216 (ALISHLRTLR…MMSDEEKKMQ (157 aa)).

This sequence belongs to the SNF2/RAD54 helicase family.

Its subcellular location is the cytoplasm. It localises to the nucleus. In terms of biological role, probable helicase, member of the UBC2/RAD6 epistasis group. Functions with DNA repair protein uvs-2/rad18 in error-free postreplication DNA repair. Involved in the maintenance of wild-type rates of instability of simple repetitive sequences such as poly(GT) repeats. Seems to be involved in maintaining a balance which acts in favor of error-prone non-homologous joining during DNA double-strand breaks repairs. This Neurospora crassa (strain ATCC 24698 / 74-OR23-1A / CBS 708.71 / DSM 1257 / FGSC 987) protein is DNA repair protein rad5 (mus-41).